The sequence spans 118 residues: MNAKALYKKKALRDRRKLRIKSKLLGDKLRPRVSVFRSNRYFYAQAIDDVKQSTITHIDGRKMGFKNTQEDAKKLGALFAEELKKAGIERAVYDRNGYLYHGVVAAFAESLRENGIVL.

Belongs to the universal ribosomal protein uL18 family. In terms of assembly, part of the 50S ribosomal subunit; part of the 5S rRNA/L5/L18/L25 subcomplex. Contacts the 5S and 23S rRNAs.

Functionally, this is one of the proteins that bind and probably mediate the attachment of the 5S RNA into the large ribosomal subunit, where it forms part of the central protuberance. The sequence is that of Large ribosomal subunit protein uL18 from Helicobacter pylori (strain J99 / ATCC 700824) (Campylobacter pylori J99).